A 169-amino-acid chain; its full sequence is ATP synthase subunit b (169 aa).

The chain crosses the membrane as a helical span at residues 3-23 (IKILLLVLPFFAFASEHGGVN).

Belongs to the ATPase B chain family. In terms of assembly, F-type ATPases have 2 components, F(1) - the catalytic core - and F(0) - the membrane proton channel. F(1) has five subunits: alpha(3), beta(3), gamma(1), delta(1), epsilon(1). F(0) has three main subunits: a(1), b(2) and c(10-14). The alpha and beta chains form an alternating ring which encloses part of the gamma chain. F(1) is attached to F(0) by a central stalk formed by the gamma and epsilon chains, while a peripheral stalk is formed by the delta and b chains.

It is found in the cell inner membrane. F(1)F(0) ATP synthase produces ATP from ADP in the presence of a proton or sodium gradient. F-type ATPases consist of two structural domains, F(1) containing the extramembraneous catalytic core and F(0) containing the membrane proton channel, linked together by a central stalk and a peripheral stalk. During catalysis, ATP synthesis in the catalytic domain of F(1) is coupled via a rotary mechanism of the central stalk subunits to proton translocation. Its function is as follows. Component of the F(0) channel, it forms part of the peripheral stalk, linking F(1) to F(0). The sequence is that of ATP synthase subunit b from Campylobacter curvus (strain 525.92).